The chain runs to 473 residues: MALKVVSFPGDLAAVSFLDSNRGGAFNQLKVDLPFQTRDRRAVSLRRTCCSMQQAPPPAWPGRAVVEPGRRSWDGPKPISIVGSTGSIGTQTLDIVAENPDKFRVVALAAGSNVTLLADQVKTFKPKLVAVRNESLVDELKEALADCDWKPEIIPGEQGVIEVARHPDAVTVVTGIVGCAGLKPTVAAIEAGKDIALANKETLIAGGPFVLPLAQKHKVKILPADSEHSAIFQCIQGLPEGALRRIILTASGGAFRDWPVDKLKEVKVADALKHPNWNMGKKITVDSATLFNKGLEVIEAHYLFGAEYDDIEIVIHPQSIIHSMIETQDSSVLAQLGWPDMRIPILYTMSWPDRIYCSEVTWPRLDLCKLGSLTFKAPDNVKYPSMDLAYAAGRAGGTMTGVLSAANEKAVELFIDEKIGYLDIFKVVELTCDAHRNELVTRPSLEEIIHYDLWAREYAASLQPSTGLSPVPV.

Residues 1-49 (MALKVVSFPGDLAAVSFLDSNRGGAFNQLKVDLPFQTRDRRAVSLRRTC) constitute a chloroplast transit peptide. NADPH-binding residues include Thr85, Gly86, Ser87, Ile88, Gly111, Asn113, and Asn199. Residue Lys200 coordinates 1-deoxy-D-xylulose 5-phosphate. An NADPH-binding site is contributed by Glu201. Asp225 provides a ligand contact to Mn(2+). 1-deoxy-D-xylulose 5-phosphate-binding residues include Ser226, Glu227, Ser251, and His274. Glu227 contacts Mn(2+). Gly280 contributes to the NADPH binding site. Residues Ser287, Asn292, Lys293, and Glu296 each coordinate 1-deoxy-D-xylulose 5-phosphate. Glu296 is a Mn(2+) binding site.

Belongs to the DXR family. Mn(2+) is required as a cofactor. It depends on Mg(2+) as a cofactor.

It is found in the plastid. The protein localises to the chloroplast stroma. The catalysed reaction is 2-C-methyl-D-erythritol 4-phosphate + NADP(+) = 1-deoxy-D-xylulose 5-phosphate + NADPH + H(+). It participates in isoprenoid biosynthesis; isopentenyl diphosphate biosynthesis via DXP pathway; isopentenyl diphosphate from 1-deoxy-D-xylulose 5-phosphate: step 1/6. In terms of biological role, enzyme of the plastid non-mevalonate pathway for isoprenoid biosynthesis that catalyzes the NADPH-dependent rearrangement and reduction of 1-deoxy-D-xylulose-5-phosphate (DXP) to 2-C-methyl-D-erythritol 4-phosphate (MEP). Required for chloroplast development. The sequence is that of 1-deoxy-D-xylulose 5-phosphate reductoisomerase, chloroplastic (DXR) from Oryza sativa subsp. japonica (Rice).